Reading from the N-terminus, the 209-residue chain is Ribulose-phosphate 3-epimerase (209 aa).

S8 contributes to the substrate binding site. The a divalent metal cation site is built by H33, D35, H64, and D170. Catalysis depends on D35, which acts as the Proton acceptor. Residues H64, 170 to 172 (DGG), and 191 to 192 (GS) each bind substrate. D170 serves as the catalytic Proton donor.

This sequence belongs to the ribulose-phosphate 3-epimerase family. The cofactor is a divalent metal cation.

It carries out the reaction D-ribulose 5-phosphate = D-xylulose 5-phosphate. It participates in carbohydrate degradation. Catalyzes the reversible epimerization of D-ribulose 5-phosphate to D-xylulose 5-phosphate. The chain is Ribulose-phosphate 3-epimerase from Mycoplasma genitalium (strain ATCC 33530 / DSM 19775 / NCTC 10195 / G37) (Mycoplasmoides genitalium).